A 163-amino-acid chain; its full sequence is Nucleotide-binding protein Ava_2001 (163 aa).

Belongs to the YajQ family.

In terms of biological role, nucleotide-binding protein. This is Nucleotide-binding protein Ava_2001 from Trichormus variabilis (strain ATCC 29413 / PCC 7937) (Anabaena variabilis).